The chain runs to 314 residues: tRNA-cytidine(32) 2-sulfurtransferase (314 aa).

The PP-loop motif motif lies at 53–58 (SGGKDS). Residues Cys-128, Cys-131, and Cys-219 each contribute to the [4Fe-4S] cluster site.

The protein belongs to the TtcA family. In terms of assembly, homodimer. It depends on Mg(2+) as a cofactor. The cofactor is [4Fe-4S] cluster.

Its subcellular location is the cytoplasm. It carries out the reaction cytidine(32) in tRNA + S-sulfanyl-L-cysteinyl-[cysteine desulfurase] + AH2 + ATP = 2-thiocytidine(32) in tRNA + L-cysteinyl-[cysteine desulfurase] + A + AMP + diphosphate + H(+). It functions in the pathway tRNA modification. Its function is as follows. Catalyzes the ATP-dependent 2-thiolation of cytidine in position 32 of tRNA, to form 2-thiocytidine (s(2)C32). The sulfur atoms are provided by the cysteine/cysteine desulfurase (IscS) system. The protein is tRNA-cytidine(32) 2-sulfurtransferase of Colwellia psychrerythraea (strain 34H / ATCC BAA-681) (Vibrio psychroerythus).